A 767-amino-acid polypeptide reads, in one-letter code: Protein hunchback (767 aa).

Disordered regions lie at residues 30–51 (EPGH…PIPS), 105–127 (QQQY…HLMG), and 174–212 (EKLQ…SNSS). Polar residues predominate over residues 39–51 (SVASSPRQSPIPS). A compositionally biased stretch (low complexity) spans 105–117 (QQQYQQHFQAAQQ). Residues 200-212 (EPEKEHDQMSNSS) are compositionally biased toward basic and acidic residues. C2H2-type zinc fingers lie at residues 242 to 264 (YKCK…TRTH), 271 to 293 (LQCP…IRKH), 299 to 321 (FQCD…RKSH), and 327 to 351 (YRCA…KYGH). 3 disordered regions span residues 357–424 (LDED…TSQL), 518–570 (QLQQ…QPQQ), and 610–704 (GVMT…APPS). A compositionally biased stretch (gly residues) spans 386-397 (IASGGSGSGSGS). Over residues 518–527 (QLQQQNQQQS) the composition is skewed to low complexity. Positions 528-537 (DNEEEEQDDE) are enriched in acidic residues. Low complexity predominate over residues 661–704 (ANTSASSTASSSGNSSNASSNSNGNSSSNSSSSGTNSAAAAPPS). C2H2-type zinc fingers lie at residues 714-736 (YECK…MGYH) and 742-766 (FKCN…RNAH).

The protein belongs to the hunchback C2H2-type zinc-finger protein family.

Its subcellular location is the nucleus. Functionally, gap class segmentation protein that controls development of head structures. This chain is Protein hunchback (hb), found in Drosophila orena (Fruit fly).